The chain runs to 286 residues: MRISLACLAALCALPAGVMAQDASVHDKPAVRGSIIANLLQDHDNPFLLYPYESNYLLYTWTSDLNKEAIRSYDWAENARKDEVKFQLSLAFPLWRGILGDNSLLGASYTQKSWWQLSNSKESAPFRETNYEPQLFLGFATDYQFAGWTLRDIEMGYNHDSNGRSDPTSRSWNRLYARLMAQNGNWLVEVKPWYVVGSTDDNPDITKYMGYYRLKVGYQLGEAILSAQGQYNWNTGYGGAELGVSYPITKHVRAYTQIYSGYGESLIDYNFNQTRVGVGLMLNDLF.

The signal sequence occupies residues 1–20; sequence MRISLACLAALCALPAGVMA. At 21 to 49 the chain is on the periplasmic side; it reads QDASVHDKPAVRGSIIANLLQDHDNPFLL. A beta stranded membrane pass occupies residues 50–62; the sequence is YPYESNYLLYTWT. Residues 63–81 lie on the Extracellular side of the membrane; sequence SDLNKEAIRSYDWAENARK. A beta stranded membrane pass occupies residues 82–96; the sequence is DEVKFQLSLAFPLWR. Residues 97 to 102 lie on the Periplasmic side of the membrane; sequence GILGDN. The chain crosses the membrane as a beta stranded span at residues 103–115; it reads SLLGASYTQKSWW. The Extracellular segment spans residues 116-125; the sequence is QLSNSKESAP. S123 provides a ligand contact to Ca(2+). The chain crosses the membrane as a beta stranded span at residues 126 to 145; the sequence is FRETNYEPQLFLGFATDYQF. Topologically, residues 146-147 are periplasmic; the sequence is AG. A beta stranded membrane pass occupies residues 148–161; that stretch reads WTLRDIEMGYNHDS. The Proton acceptor role is filled by H159. The active-site Nucleophile is S161. The Extracellular segment spans residues 162–170; sequence NGRSDPTSR. R164 and S169 together coordinate Ca(2+). The chain crosses the membrane as a beta stranded span at residues 171 to 183; the sequence is SWNRLYARLMAQN. Residues 184 to 185 lie on the Periplasmic side of the membrane; the sequence is GN. Residues 186–195 form a beta stranded membrane-spanning segment; sequence WLVEVKPWYV. At 196–213 the chain is on the extracellular side; the sequence is VGSTDDNPDITKYMGYYR. D201 provides a ligand contact to Ca(2+). Residues 214–220 form a beta stranded membrane-spanning segment; the sequence is LKVGYQL. At 221–222 the chain is on the periplasmic side; that stretch reads GE. The chain crosses the membrane as a beta stranded span at residues 223 to 231; the sequence is AILSAQGQY. Over 232–238 the chain is Extracellular; the sequence is NWNTGYG. A beta stranded transmembrane segment spans residues 239 to 247; that stretch reads GAELGVSYP. Over 248–252 the chain is Periplasmic; it reads ITKHV. A beta stranded transmembrane segment spans residues 253–262; that stretch reads RAYTQIYSGY. The Extracellular portion of the chain corresponds to 263-271; the sequence is GESLIDYNF. A beta stranded transmembrane segment spans residues 272–283; sequence NQTRVGVGLMLN. The Periplasmic segment spans residues 284–286; it reads DLF.

This sequence belongs to the phospholipase A1 family. As to quaternary structure, homodimer; dimerization is reversible, and the dimeric form is the active one. Requires Ca(2+) as cofactor.

It is found in the cell outer membrane. It catalyses the reaction a 1,2-diacyl-sn-glycero-3-phosphocholine + H2O = a 2-acyl-sn-glycero-3-phosphocholine + a fatty acid + H(+). The catalysed reaction is a 1,2-diacyl-sn-glycero-3-phosphocholine + H2O = a 1-acyl-sn-glycero-3-phosphocholine + a fatty acid + H(+). Its function is as follows. Hydrolysis of phosphatidylcholine with phospholipase A2 (EC 3.1.1.4) and phospholipase A1 (EC 3.1.1.32) activities. This Klebsiella pneumoniae protein is Phospholipase A1 (pldA).